Reading from the N-terminus, the 614-residue chain is Male-specific lethal 1 homolog (614 aa).

Disordered stretches follow at residues 1–127 and 147–217; these read MTMR…GCSP and KEPT…GASS. 2 positions are modified to phosphoserine: Ser-66 and Ser-126. The segment covering 158-169 has biased composition (low complexity); it reads GAASPAATASDP. A compositionally biased stretch (pro residues) spans 170 to 184; sequence AGPPPLPLPGPPPLA. Positions 185–194 are enriched in low complexity; that stretch reads PTATAGTLAA. Phosphoserine is present on Ser-205. Positions 213–282 form a coiled coil; it reads SGASSQAACL…KDNEKERHKL (70 aa). The interaction with MSL2 stretch occupies residues 223-237; the sequence is KQILLLQLDLIEQQQ. Basic and acidic residues-rich tracts occupy residues 272–281 and 294–304; these read KKDNEKERHK and TELSEKIKLEC. A disordered region spans residues 272–420; that stretch reads KKDNEKERHK…PKEKAFSSEI (149 aa). A Glycyl lysine isopeptide (Lys-Gly) (interchain with G-Cter in SUMO2) cross-link involves residue Lys-301. A Nuclear localization signal motif is present at residues 317 to 346; sequence PKPFSCGRSGKGHKRKSPFGSTERKTPVKK. At Lys-353 the chain carries N6-acetyllysine. Residues Lys-365 and Lys-378 each participate in a glycyl lysine isopeptide (Lys-Gly) (interchain with G-Cter in SUMO2) cross-link. Over residues 376-392 the composition is skewed to basic and acidic residues; sequence VCKRELRSQETPEKPRS. Phosphoserine is present on Ser-393. Over residues 393–407 the composition is skewed to polar residues; the sequence is SVDTPPRLSTPQKGP. Thr-396 is modified (phosphothreonine). Residue Ser-442 is modified to Phosphoserine. The PEHE domain occupies 472–591; it reads VLAVPSWRDH…LTPQNFELPW (120 aa). The interaction with KAT8 HAT domain stretch occupies residues 496-514; the sequence is ENLDDSVFSKRHAKLELDE. Residues 505-519 carry the Bipartite nuclear localization signal motif; sequence KRHAKLELDEKRRKR. The tract at residues 550–591 is sufficient for interaction with MSL3 MRG domain; sequence EVTSFFPEPDDVESLMITPFLPVVAFGRPLPKLTPQNFELPW.

This sequence belongs to the msl-1 family. As to quaternary structure, component of a multisubunit histone acetyltransferase complex (MSL) at least composed of the KAT8/MOF/MYST1, MSL1/hampin, MSL2 and MSL3. Forms a MSL heterotetrameric core with MSL2. Interacts (via PEHE domain) with KAT8 (via HAT domain) and MSL3 (via MRG domain); both interactions are direct. Directly interacts with NUPR1. Interacts with TP53BP1; this interaction may be required for MSL1 DNA repair activity, but not for histone acetyltransferase activity. Interacts with TTC4, ECM2 and PIHD1. In terms of processing, sumoylated with SUMO1.

The protein resides in the nucleus. The protein localises to the nucleoplasm. It localises to the nucleus speckle. Its function is as follows. Non-catalytic component of the MSL histone acetyltransferase complex, a multiprotein complex that mediates the majority of histone H4 acetylation at 'Lys-16' (H4K16ac), an epigenetic mark that prevents chromatin compaction. The MSL complex is required for chromosome stability and genome integrity by maintaining homeostatic levels of H4K16ac. The MSL complex is also involved in gene dosage by promoting up-regulation of genes expressed by the X chromosome. X up-regulation is required to compensate for autosomal biallelic expression. The MSL complex also participates in gene dosage compensation by promoting expression of Tsix non-coding RNA. Within the MSL complex, acts as a scaffold to tether MSL3 and KAT8 together for enzymatic activity regulation. Greatly enhances MSL2 E3 ubiquitin ligase activity, promoting monoubiquitination of histone H2B at 'Lys-34' (H2BK34Ub). This modification in turn stimulates histone H3 methylation at 'Lys-4' (H3K4me) and 'Lys-79' (H3K79me) and leads to gene activation, including that of HOXA9 and MEIS1. This Homo sapiens (Human) protein is Male-specific lethal 1 homolog.